We begin with the raw amino-acid sequence, 189 residues long: GTP cyclohydrolase 1 (189 aa).

Positions 79, 82, and 151 each coordinate Zn(2+).

The protein belongs to the GTP cyclohydrolase I family. As to quaternary structure, toroid-shaped homodecamer, composed of two pentamers of five dimers.

It catalyses the reaction GTP + H2O = 7,8-dihydroneopterin 3'-triphosphate + formate + H(+). The protein operates within cofactor biosynthesis; 7,8-dihydroneopterin triphosphate biosynthesis; 7,8-dihydroneopterin triphosphate from GTP: step 1/1. This is GTP cyclohydrolase 1 from Lactiplantibacillus plantarum (strain ATCC BAA-793 / NCIMB 8826 / WCFS1) (Lactobacillus plantarum).